Consider the following 436-residue polypeptide: ATP-dependent RNA helicase SUB2 (436 aa).

The segment covering 1–16 (MSAEEDLIDYSDEELN) has biased composition (acidic residues). The interval 1 to 33 (MSAEEDLIDYSDEELNTNETAAPAADSNGKKGE) is disordered. The Q motif motif lies at 52–80 (TGFRDFLLKPELLRAIGDCGFEHPSEVQQ). Positions 83–258 (IPQAMLGGDI…KKFMQNPTEH (176 aa)) constitute a Helicase ATP-binding domain. 96–103 (AKSGLGKT) contacts ATP. The DEAD box signature appears at 205-208 (DECD). The region spanning 270–431 (GLQQYFVALE…EFPKDGIDAS (162 aa)) is the Helicase C-terminal domain.

This sequence belongs to the DEAD box helicase family. DECD subfamily.

It localises to the nucleus. It carries out the reaction ATP + H2O = ADP + phosphate + H(+). ATP-binding RNA helicase involved in transcription elongation and required for the export of mRNA out of the nucleus. SUB2 also plays a role in pre-mRNA splicing and spliceosome assembly. May be involved in rDNA and telomeric silencing, and maintenance of genome integrity. In Pyricularia oryzae (strain 70-15 / ATCC MYA-4617 / FGSC 8958) (Rice blast fungus), this protein is ATP-dependent RNA helicase SUB2 (SUB2).